The primary structure comprises 259 residues: Zinc import ATP-binding protein ZnuC (259 aa).

The region spanning 6-223 (VTVQSVSVTL…PAYHELFGPG (218 aa)) is the ABC transporter domain. An ATP-binding site is contributed by 38 to 45 (GPNGAGKS). Residues 230–259 (ALYTHDHDHDHDLHGNATHSHDHNGPCNHD) are disordered. Residues 233-259 (THDHDHDHDLHGNATHSHDHNGPCNHD) show a composition bias toward basic and acidic residues.

It belongs to the ABC transporter superfamily. Zinc importer (TC 3.A.1.15.5) family. As to quaternary structure, the complex is composed of two ATP-binding proteins (ZnuC), two transmembrane proteins (ZnuB) and a solute-binding protein (ZnuA).

The protein localises to the cell inner membrane. It carries out the reaction Zn(2+)(out) + ATP(in) + H2O(in) = Zn(2+)(in) + ADP(in) + phosphate(in) + H(+)(in). Functionally, part of the ABC transporter complex ZnuABC involved in zinc import. Responsible for energy coupling to the transport system. This chain is Zinc import ATP-binding protein ZnuC, found in Alcanivorax borkumensis (strain ATCC 700651 / DSM 11573 / NCIMB 13689 / SK2).